Reading from the N-terminus, the 383-residue chain is Protein RecA (383 aa).

G79–T86 contributes to the ATP binding site.

It belongs to the RecA family.

It is found in the cytoplasm. Can catalyze the hydrolysis of ATP in the presence of single-stranded DNA, the ATP-dependent uptake of single-stranded DNA by duplex DNA, and the ATP-dependent hybridization of homologous single-stranded DNAs. It interacts with LexA causing its activation and leading to its autocatalytic cleavage. In Streptococcus gordonii (strain Challis / ATCC 35105 / BCRC 15272 / CH1 / DL1 / V288), this protein is Protein RecA.